The chain runs to 679 residues: Shutoff protein (679 aa).

The interval 178-232 is binding to host EIF4G; the sequence is LFDYLIGESQDPNDLDSEYKLAFTDEDLPQEGQAEKTKQRETLGAVATFGAVLLS. One can recognise an RRM domain in the interval 235–353; it reads RLFTHPVVIK…ELAGANYAEA (119 aa). Tyrosine 252 and tyrosine 564 each carry phosphotyrosine; by host. The disordered stretch occupies residues 552–679; that stretch reads REKSILKRGG…SLQGTRRESS (128 aa). The span at 661 to 679 shows a compositional bias: basic and acidic residues; that stretch reads PRQETAEKESLQGTRRESS.

It belongs to the adenoviridae shutoff protein family. Monomer. Interacts with hexon protein; this interaction allows chaperoning and trimerization of hexon proteins. Interacts (via N-terminus) with host initiation factor EIF4G (via C-terminus). Interacts (via RRM domain) with viral mRNAs that contain the tripartite leader; this interaction allows ribosome shunting and expression of viral late mRNAs. In terms of processing, might be cleaved by the viral protease. Phosphorylated. Tyrosine phosphorylation enhances preferential binding to tripartite leader mRNAs and allows ribosome shunting. Post-translationally, methylated. Asymmetric dimethylation by host PRMT1 of the Arg/Gly-rich region may regulate shutoff protein binding to hexon and promote the capsid assembly in the nucleus.

Its subcellular location is the host cytoplasm. In terms of biological role, protein that inhibits host translation while promoting late viral translation by ribosome shunting. Blocks host cap-dependent translation by binding to eIF4G, displacing MKNK1 from cap initiation complexes and preventing EIF4E phosphorylation. Binds to the tripartite leader sequence of viral late mRNAs and recruits host eIF4G, PABPC1/poly-A binding protein and 40S ribosomes subunits on viral mRNAs, allowing ribosome shunting and efficient translation of late viral mRNAs even though conventional translation via ribosome scanning from the cap has been shut off in the host cell. During assembly, acts as a chaperone protein that helps hexon proteins assembly into trimers. The sequence is that of Shutoff protein from Snake adenovirus serotype 1 (SnAdV-1).